The following is a 230-amino-acid chain: Type II restriction enzyme NlaIII (230 aa).

The enzyme catalyses Endonucleolytic cleavage of DNA to give specific double-stranded fragments with terminal 5'-phosphates.. In terms of biological role, a P subtype restriction enzyme that recognizes the double-stranded sequence 5'-CATG-3' and cleaves after G-4. The chain is Type II restriction enzyme NlaIII (nlaIIIR) from Neisseria lactamica.